The chain runs to 278 residues: HTH-type transcriptional activator RhaS (278 aa).

Positions 174 to 272 (NLLLAWLEDH…NWSPRDIRQG (99 aa)) constitute an HTH araC/xylS-type domain. DNA-binding regions (H-T-H motif) lie at residues 191–212 (DAVA…KQQT) and 239–262 (VTDI…RREF).

In terms of assembly, binds DNA as a dimer.

The protein localises to the cytoplasm. In terms of biological role, activates expression of the rhaBAD and rhaT operons. This chain is HTH-type transcriptional activator RhaS, found in Escherichia coli (strain SMS-3-5 / SECEC).